Reading from the N-terminus, the 221-residue chain is Flavin-dependent thymidylate synthase (221 aa).

In terms of domain architecture, ThyX spans 9–209 (GFVKLLDHMG…PWTYESFIRY (201 aa)). Residues serine 55, 78–80 (RHR), and glutamate 86 contribute to the FAD site. Residues 75 to 78 (QWMR), 86 to 90 (ELSGR), and arginine 148 each bind dUMP. The ThyX motif motif lies at 78 to 88 (RHRIASYNELS). FAD contacts are provided by residues 164–166 (NAR) and asparagine 170. Residue arginine 175 participates in dUMP binding. The active-site Involved in ionization of N3 of dUMP, leading to its activation is the arginine 175.

This sequence belongs to the thymidylate synthase ThyX family. As to quaternary structure, homotetramer. FAD is required as a cofactor.

It catalyses the reaction dUMP + (6R)-5,10-methylene-5,6,7,8-tetrahydrofolate + NADPH + H(+) = dTMP + (6S)-5,6,7,8-tetrahydrofolate + NADP(+). Its pathway is pyrimidine metabolism; dTTP biosynthesis. Catalyzes the reductive methylation of 2'-deoxyuridine-5'-monophosphate (dUMP) to 2'-deoxythymidine-5'-monophosphate (dTMP) while utilizing 5,10-methylenetetrahydrofolate (mTHF) as the methyl donor, and NADPH and FADH(2) as the reductant. This chain is Flavin-dependent thymidylate synthase, found in Pseudothermotoga lettingae (strain ATCC BAA-301 / DSM 14385 / NBRC 107922 / TMO) (Thermotoga lettingae).